The primary structure comprises 168 residues: Thiol peroxidase (168 aa).

The 149-residue stretch at Pro-20–Ala-168 folds into the Thioredoxin domain. Cys-62 serves as the catalytic Cysteine sulfenic acid (-SOH) intermediate. A disulfide bond links Cys-62 and Cys-96.

The protein belongs to the peroxiredoxin family. Tpx subfamily. As to quaternary structure, homodimer.

It catalyses the reaction a hydroperoxide + [thioredoxin]-dithiol = an alcohol + [thioredoxin]-disulfide + H2O. Thiol-specific peroxidase that catalyzes the reduction of hydrogen peroxide and organic hydroperoxides to water and alcohols, respectively. Plays a role in cell protection against oxidative stress by detoxifying peroxides. The sequence is that of Thiol peroxidase from Chlorobaculum tepidum (strain ATCC 49652 / DSM 12025 / NBRC 103806 / TLS) (Chlorobium tepidum).